Here is a 628-residue protein sequence, read N- to C-terminus: 1-deoxy-D-xylulose-5-phosphate synthase (628 aa).

Thiamine diphosphate-binding positions include His-80 and 121-123; that span reads GHS. A Mg(2+)-binding site is contributed by Asp-152. Thiamine diphosphate is bound by residues 153–154, Asn-181, Tyr-289, and Glu-370; that span reads GG. Asn-181 contacts Mg(2+).

This sequence belongs to the transketolase family. DXPS subfamily. Homodimer. It depends on Mg(2+) as a cofactor. Thiamine diphosphate is required as a cofactor.

The enzyme catalyses D-glyceraldehyde 3-phosphate + pyruvate + H(+) = 1-deoxy-D-xylulose 5-phosphate + CO2. The protein operates within metabolic intermediate biosynthesis; 1-deoxy-D-xylulose 5-phosphate biosynthesis; 1-deoxy-D-xylulose 5-phosphate from D-glyceraldehyde 3-phosphate and pyruvate: step 1/1. Catalyzes the acyloin condensation reaction between C atoms 2 and 3 of pyruvate and glyceraldehyde 3-phosphate to yield 1-deoxy-D-xylulose-5-phosphate (DXP). The protein is 1-deoxy-D-xylulose-5-phosphate synthase of Alkalilimnicola ehrlichii (strain ATCC BAA-1101 / DSM 17681 / MLHE-1).